The primary structure comprises 142 residues: Large ribosomal subunit protein uL11 (142 aa).

It belongs to the universal ribosomal protein uL11 family. Part of the ribosomal stalk of the 50S ribosomal subunit. Interacts with L10 and the large rRNA to form the base of the stalk. L10 forms an elongated spine to which L12 dimers bind in a sequential fashion forming a multimeric L10(L12)X complex. In terms of processing, one or more lysine residues are methylated.

In terms of biological role, forms part of the ribosomal stalk which helps the ribosome interact with GTP-bound translation factors. This is Large ribosomal subunit protein uL11 from Tolumonas auensis (strain DSM 9187 / NBRC 110442 / TA 4).